Consider the following 319-residue polypeptide: Chromoplast-specific carotenoid-associated protein C1, chromoplastic (319 aa).

A chromoplast-targeting transit peptide spans 1-55; the sequence is MTSIAFWNAFTVNPFPAAARRSPPPLTPFTSGALSPARKPRILEISHPRTLPSFR.

This sequence belongs to the PAP/fibrillin family. In terms of tissue distribution, expressed in flower buds and floral lip tissues. Not detected in roots and leaves. Specifically expressed in conical papillate cells of adaxial epidermis of lip tissues.

It is found in the plastid. The protein resides in the chromoplast. In terms of biological role, may be involved in carotenoid sequestration within chromoplasts. This chain is Chromoplast-specific carotenoid-associated protein C1, chromoplastic (CHRC1), found in Oncidium hybrid cultivar (Orchid).